Here is a 486-residue protein sequence, read N- to C-terminus: UDP-N-acetylmuramate--L-alanine ligase (486 aa).

132 to 138 (GTHGKTT) serves as a coordination point for ATP.

This sequence belongs to the MurCDEF family.

It localises to the cytoplasm. The catalysed reaction is UDP-N-acetyl-alpha-D-muramate + L-alanine + ATP = UDP-N-acetyl-alpha-D-muramoyl-L-alanine + ADP + phosphate + H(+). Its pathway is cell wall biogenesis; peptidoglycan biosynthesis. In terms of biological role, cell wall formation. This chain is UDP-N-acetylmuramate--L-alanine ligase, found in Halorhodospira halophila (strain DSM 244 / SL1) (Ectothiorhodospira halophila (strain DSM 244 / SL1)).